Here is a 269-residue protein sequence, read N- to C-terminus: Expansin-B9 (269 aa).

Positions 1 to 24 are cleaved as a signal peptide; it reads MGSLANNIMVVGAVLAALVVGGSC. N-linked (GlcNAc...) asparagine glycosylation occurs at asparagine 34. The 107-residue stretch at 63-169 folds into the Expansin-like EG45 domain; the sequence is GGACGIKNVN…RRVRCKYPAG (107 aa). Intrachain disulfides connect cysteine 66–cysteine 94, cysteine 97–cysteine 164, and cysteine 102–cysteine 108. One can recognise an Expansin-like CBD domain in the interval 183–264; the sequence is NYVAVLVKFV…NWRPDAVYTS (82 aa).

Belongs to the expansin family. Expansin B subfamily. Expressed in anthers and pollen.

Its subcellular location is the secreted. It localises to the cell wall. The protein localises to the membrane. Functionally, may aid fertilization by loosening the cell wall of the stigma and style, thereby facilitating penetration of the pollen tube. Acts selectively on grass cell walls, which are relatively poor in pectins and xyloglucans and rich in glucuronoarabinoxylans and (1-3),(1-4)-beta-D-glucans, when compared with cell walls of other angiosperms, including other monocots. In Zea mays (Maize), this protein is Expansin-B9 (EXPB9).